The chain runs to 377 residues: Glutamate 5-kinase (377 aa).

K18 serves as a coordination point for ATP. Substrate-binding residues include S59, D146, and N158. ATP is bound by residues 178–179 (SD) and 222–228 (TGGMATK). One can recognise a PUA domain in the interval 286–363 (QGWVTVDAGA…DAIEAELGFT (78 aa)).

It belongs to the glutamate 5-kinase family.

It localises to the cytoplasm. It carries out the reaction L-glutamate + ATP = L-glutamyl 5-phosphate + ADP. It functions in the pathway amino-acid biosynthesis; L-proline biosynthesis; L-glutamate 5-semialdehyde from L-glutamate: step 1/2. Its function is as follows. Catalyzes the transfer of a phosphate group to glutamate to form L-glutamate 5-phosphate. This chain is Glutamate 5-kinase, found in Caulobacter vibrioides (strain ATCC 19089 / CIP 103742 / CB 15) (Caulobacter crescentus).